Reading from the N-terminus, the 165-residue chain is Phosphopantetheine adenylyltransferase (165 aa).

Residue Ser11 coordinates substrate. ATP is bound by residues 11–12 (SF) and His19. Positions 43, 76, and 90 each coordinate substrate. ATP contacts are provided by residues 91 to 93 (GIR), Glu101, and 126 to 132 (FSFISSS).

It belongs to the bacterial CoaD family. As to quaternary structure, homohexamer. Mg(2+) is required as a cofactor.

Its subcellular location is the cytoplasm. The catalysed reaction is (R)-4'-phosphopantetheine + ATP + H(+) = 3'-dephospho-CoA + diphosphate. It participates in cofactor biosynthesis; coenzyme A biosynthesis; CoA from (R)-pantothenate: step 4/5. Reversibly transfers an adenylyl group from ATP to 4'-phosphopantetheine, yielding dephospho-CoA (dPCoA) and pyrophosphate. This Latilactobacillus sakei subsp. sakei (strain 23K) (Lactobacillus sakei subsp. sakei) protein is Phosphopantetheine adenylyltransferase.